Consider the following 166-residue polypeptide: Ribonuclease H2 subunit C (166 aa).

An N-acetylmethionine modification is found at Met1.

Belongs to the RNase H2 subunit C family. As to quaternary structure, the RNase H2 complex is a heterotrimer composed of the catalytic subunit RNASEH2A and the non-catalytic subunits RNASEH2B and RNASEH2C.

It is found in the nucleus. In terms of biological role, non catalytic subunit of RNase H2, an endonuclease that specifically degrades the RNA of RNA:DNA hybrids. Participates in DNA replication, possibly by mediating the removal of lagging-strand Okazaki fragment RNA primers during DNA replication. Mediates the excision of single ribonucleotides from DNA:RNA duplexes. The chain is Ribonuclease H2 subunit C (Rnaseh2c) from Mus musculus (Mouse).